The primary structure comprises 320 residues: Fructose-1,6-bisphosphatase class 1 (320 aa).

Mg(2+) is bound by residues E93, D114, L116, and D117. Substrate contacts are provided by residues D117 to S120, Y225, and K256. E262 is a Mg(2+) binding site.

It belongs to the FBPase class 1 family. Homotetramer. Mg(2+) serves as cofactor.

It is found in the cytoplasm. The catalysed reaction is beta-D-fructose 1,6-bisphosphate + H2O = beta-D-fructose 6-phosphate + phosphate. The protein operates within carbohydrate biosynthesis; gluconeogenesis. This is Fructose-1,6-bisphosphatase class 1 from Syntrophotalea carbinolica (strain DSM 2380 / NBRC 103641 / GraBd1) (Pelobacter carbinolicus).